The following is a 175-amino-acid chain: uncharacterized protein (175 aa).

The next 5 membrane-spanning stretches (helical) occupy residues 25–45 (MIAIGGTIGTGLFLGAGTTIS), 46–66 (ATGPSVIFIYAIMGLFFFFLL), 97–117 (FAGWTYWIGILFACMAELTAV), 124–144 (WLPGLPAWLIEVSVLGLLTLL), and 155–175 (TEFWFAMIKIIAIISLVVTGI).

It belongs to the amino acid-polyamine-organocation (APC) superfamily.

The protein resides in the cell membrane. This is an uncharacterized protein from Lactobacillus delbrueckii subsp. lactis.